Reading from the N-terminus, the 432-residue chain is Methylenetetrahydrofolate--tRNA-(uracil-5-)-methyltransferase TrmFO (432 aa).

FAD is bound at residue 7-12 (GGGLAG).

The protein belongs to the MnmG family. TrmFO subfamily. It depends on FAD as a cofactor.

The protein resides in the cytoplasm. The enzyme catalyses uridine(54) in tRNA + (6R)-5,10-methylene-5,6,7,8-tetrahydrofolate + NADH + H(+) = 5-methyluridine(54) in tRNA + (6S)-5,6,7,8-tetrahydrofolate + NAD(+). It catalyses the reaction uridine(54) in tRNA + (6R)-5,10-methylene-5,6,7,8-tetrahydrofolate + NADPH + H(+) = 5-methyluridine(54) in tRNA + (6S)-5,6,7,8-tetrahydrofolate + NADP(+). Functionally, catalyzes the folate-dependent formation of 5-methyl-uridine at position 54 (M-5-U54) in all tRNAs. This is Methylenetetrahydrofolate--tRNA-(uracil-5-)-methyltransferase TrmFO from Coprothermobacter proteolyticus (strain ATCC 35245 / DSM 5265 / OCM 4 / BT).